Here is a 395-residue protein sequence, read N- to C-terminus: Ribose-phosphate pyrophosphokinase 2, chloroplastic (395 aa).

Low complexity predominate over residues 1 to 23 (MASPAPRSLSSSSSSSSSSFCPS). The interval 1-33 (MASPAPRSLSSSSSSSSSSFCPSISPPPRSPSR) is disordered. A chloroplast-targeting transit peptide spans 1–42 (MASPAPRSLSSSSSSSSSSFCPSISPPPRSPSRASLPFSVKC). D209, H211, D220, and D224 together coordinate Mg(2+). Residues 295 to 310 (GKVAVMLDDMIDTAGT) form a binding of phosphoribosylpyrophosphate region.

Belongs to the ribose-phosphate pyrophosphokinase family.

The protein resides in the plastid. Its subcellular location is the chloroplast. The enzyme catalyses D-ribose 5-phosphate + ATP = 5-phospho-alpha-D-ribose 1-diphosphate + AMP + H(+). This chain is Ribose-phosphate pyrophosphokinase 2, chloroplastic (PRS2), found in Spinacia oleracea (Spinach).